The chain runs to 213 residues: Holliday junction resolvase RecU (213 aa).

4 residues coordinate Mg(2+): T99, D101, E114, and Q133.

It belongs to the RecU family. Requires Mg(2+) as cofactor.

The protein resides in the cytoplasm. It carries out the reaction Endonucleolytic cleavage at a junction such as a reciprocal single-stranded crossover between two homologous DNA duplexes (Holliday junction).. Its function is as follows. Endonuclease that resolves Holliday junction intermediates in genetic recombination. Cleaves mobile four-strand junctions by introducing symmetrical nicks in paired strands. Promotes annealing of linear ssDNA with homologous dsDNA. Required for DNA repair, homologous recombination and chromosome segregation. The polypeptide is Holliday junction resolvase RecU (Lactococcus lactis subsp. lactis (strain IL1403) (Streptococcus lactis)).